A 59-amino-acid chain; its full sequence is MAVQQNKKSPSKRGMHRSHDFLNAAPLAVEPSTGEVHLRHHISPNGYYRGKKVVKTKND.

The disordered stretch occupies residues 1–25; it reads MAVQQNKKSPSKRGMHRSHDFLNAA.

It belongs to the bacterial ribosomal protein bL32 family.

The polypeptide is Large ribosomal subunit protein bL32 (Paraburkholderia phymatum (strain DSM 17167 / CIP 108236 / LMG 21445 / STM815) (Burkholderia phymatum)).